Here is a 397-residue protein sequence, read N- to C-terminus: DNA-directed RNA polymerase subunit Rpo1C (397 aa).

The protein belongs to the RNA polymerase beta' chain family. As to quaternary structure, part of the RNA polymerase complex.

It is found in the cytoplasm. The catalysed reaction is RNA(n) + a ribonucleoside 5'-triphosphate = RNA(n+1) + diphosphate. Functionally, DNA-dependent RNA polymerase (RNAP) catalyzes the transcription of DNA into RNA using the four ribonucleoside triphosphates as substrates. Forms part of the jaw domain. The chain is DNA-directed RNA polymerase subunit Rpo1C from Halobacterium salinarum (strain ATCC 29341 / DSM 671 / R1).